The chain runs to 858 residues: Translation initiation factor IF-2 (858 aa).

Positions 49–271 (TTTVTHPKSQ…NKPAPVRKDK (223 aa)) are disordered. Low complexity predominate over residues 80–226 (NQQQSNSRHQ…RFGGSLNSNN (147 aa)). Residues 239–256 (NRRRNNRNNKSRNNKNQR) show a composition bias toward basic residues. The tr-type G domain occupies 359–528 (PRAPVVTVMG…LLQSEVLELT (170 aa)). Positions 368 to 375 (GHVDHGKT) are G1. 368–375 (GHVDHGKT) provides a ligand contact to GTP. Residues 393-397 (GITQA) are G2. Residues 414 to 417 (DTPG) are G3. GTP-binding positions include 414-418 (DTPGH) and 468-471 (NKID). The segment at 468-471 (NKID) is G4. The segment at 504–506 (SAK) is G5.

It belongs to the TRAFAC class translation factor GTPase superfamily. Classic translation factor GTPase family. IF-2 subfamily.

It is found in the cytoplasm. Its function is as follows. One of the essential components for the initiation of protein synthesis. Protects formylmethionyl-tRNA from spontaneous hydrolysis and promotes its binding to the 30S ribosomal subunits. Also involved in the hydrolysis of GTP during the formation of the 70S ribosomal complex. The protein is Translation initiation factor IF-2 of Lactiplantibacillus plantarum (strain ATCC BAA-793 / NCIMB 8826 / WCFS1) (Lactobacillus plantarum).